Consider the following 861-residue polypeptide: Glucans biosynthesis glucosyltransferase H (861 aa).

The next 6 membrane-spanning stretches (helical) occupy residues 142-162 (FILL…MKGI), 188-208 (VLPY…FCWV), 516-536 (VFLT…FLVL), 573-593 (LFST…MLIW), 600-620 (FGGV…SVLL), and 683-703 (FLWW…VSVI).

The protein belongs to the glycosyltransferase 2 family. OpgH subfamily.

It is found in the cell inner membrane. It functions in the pathway glycan metabolism; osmoregulated periplasmic glucan (OPG) biosynthesis. Involved in the biosynthesis of osmoregulated periplasmic glucans (OPGs). The sequence is that of Glucans biosynthesis glucosyltransferase H from Pseudomonas aeruginosa (strain LESB58).